We begin with the raw amino-acid sequence, 317 residues long: Methionyl-tRNA formyltransferase (317 aa).

110-113 lines the (6S)-5,6,7,8-tetrahydrofolate pocket; that stretch reads SLLP.

It belongs to the Fmt family.

The catalysed reaction is L-methionyl-tRNA(fMet) + (6R)-10-formyltetrahydrofolate = N-formyl-L-methionyl-tRNA(fMet) + (6S)-5,6,7,8-tetrahydrofolate + H(+). Its function is as follows. Attaches a formyl group to the free amino group of methionyl-tRNA(fMet). The formyl group appears to play a dual role in the initiator identity of N-formylmethionyl-tRNA by promoting its recognition by IF2 and preventing the misappropriation of this tRNA by the elongation apparatus. In Bacillus pumilus (strain SAFR-032), this protein is Methionyl-tRNA formyltransferase.